Reading from the N-terminus, the 274-residue chain is tRNA (mnm(5)s(2)U34)-methyltransferase, chloroplastic (274 aa).

The N-terminal 50 residues, 1–50 (MAAGFFQAEMSILSSTLARSYSLPIRKTLMTFDFRIAMQRNPCLRIRRSC), are a transit peptide targeting the chloroplast. The S-adenosyl-L-methionine site is built by asparagine 108, asparagine 110, aspartate 134, glutamine 136, and histidine 166.

Belongs to the methyltransferase superfamily. MnmM family.

It localises to the plastid. The protein localises to the chloroplast. It carries out the reaction 5-aminomethyl-2-thiouridine(34) in tRNA + S-adenosyl-L-methionine = 5-methylaminomethyl-2-thiouridine(34) in tRNA + S-adenosyl-L-homocysteine + H(+). Its pathway is tRNA modification. Involved in the biosynthesis of 5-methylaminomethyl-2-thiouridine (mnm(5)s(2)U) at the wobble position (U34) in tRNA. Catalyzes the transfer of a methyl group from S-adenosyl-L-methionine to nm(5)s(2)U34 to form mnm(5)s(2)U34. The polypeptide is tRNA (mnm(5)s(2)U34)-methyltransferase, chloroplastic (Arabidopsis thaliana (Mouse-ear cress)).